The sequence spans 199 residues: ATP-dependent Clp protease proteolytic subunit 2 (199 aa).

Catalysis depends on Ser98, which acts as the Nucleophile. His123 is an active-site residue.

This sequence belongs to the peptidase S14 family. Fourteen ClpP subunits assemble into 2 heptameric rings which stack back to back to give a disk-like structure with a central cavity, resembling the structure of eukaryotic proteasomes.

Its subcellular location is the cytoplasm. It catalyses the reaction Hydrolysis of proteins to small peptides in the presence of ATP and magnesium. alpha-casein is the usual test substrate. In the absence of ATP, only oligopeptides shorter than five residues are hydrolyzed (such as succinyl-Leu-Tyr-|-NHMec, and Leu-Tyr-Leu-|-Tyr-Trp, in which cleavage of the -Tyr-|-Leu- and -Tyr-|-Trp bonds also occurs).. In terms of biological role, cleaves peptides in various proteins in a process that requires ATP hydrolysis. Has a chymotrypsin-like activity. Plays a major role in the degradation of misfolded proteins. This Corynebacterium diphtheriae (strain ATCC 700971 / NCTC 13129 / Biotype gravis) protein is ATP-dependent Clp protease proteolytic subunit 2.